Consider the following 1080-residue polypeptide: Putative bifunctional amine oxidase DDB_G0291301 (1080 aa).

Residues 1–450 (MREFLKDDYD…TIAKSTVPTN (450 aa)) are putative sarcosine oxidase. 10-40 (DVIVCGGGPVGLATAYRCAKAGKKVLCLEKS) is an FAD binding site. Residues 445–464 (STVPTNQSSNPDGASSTAPT) are disordered. Residues 450 to 1080 (NQSSNPDGAS…NTAASIGGLK (631 aa)) form a putative L-amino-acid oxidase region. A helical membrane pass occupies residues 508-528 (VGIIGAGMAGLYAAMILQDLG). Residues glutamate 535, arginine 544, and 563-564 (GA) contribute to the FAD site. Tyrosine 886 serves as a coordination point for substrate. FAD-binding positions include glutamate 978 and 987 to 990 (VIGS).

It in the N-terminal section; belongs to the MSOX/MTOX family. This sequence in the C-terminal section; belongs to the flavin monoamine oxidase family. FAD serves as cofactor.

Its subcellular location is the membrane. The enzyme catalyses sarcosine + O2 + H2O = formaldehyde + glycine + H2O2. It catalyses the reaction L-pipecolate + O2 = L-1-piperideine-6-carboxylate + H2O2 + H(+). The catalysed reaction is an L-alpha-amino acid + O2 + H2O = a 2-oxocarboxylate + H2O2 + NH4(+). Catalyzes an oxidative deamination of predominantly hydrophobic and aromatic L-amino acids. Metabolizes sarcosine, L-pipecolic acid and L-proline. In Dictyostelium discoideum (Social amoeba), this protein is Putative bifunctional amine oxidase DDB_G0291301.